We begin with the raw amino-acid sequence, 277 residues long: Adaptin ear-binding coat-associated protein 1 (277 aa).

Positions 164–277 are disordered; that stretch reads GNITAKKGGT…APQPSNWVQF (114 aa). The segment covering 187–201 has biased composition (pro residues); it reads LPPPPGGKVTIPPPS. Residue Thr211 is modified to Phosphothreonine. A compositionally biased stretch (low complexity) spans 222–234; that stretch reads SNDSDILLDLDSP. A compositionally biased stretch (pro residues) spans 235-245; sequence APVPTSAPAPA. 2 short sequence motifs (WXXF motif) span residues 254–257 and 274–277; these read WGDF and WVQF. Positions 258–277 are enriched in polar residues; sequence STASSSVPNQAPQPSNWVQF.

This sequence belongs to the NECAP family. As to quaternary structure, interacts with AP1G1 and AP2A1 components of the adapter protein complexes AP-1 and AP-2. Interacts with the GAE domain proteins GGA1, GGA2 and GGA3. Interacts with AP2A2. As to expression, expressed predominantly in brain (at protein level).

The protein resides in the cytoplasmic vesicle. It is found in the clathrin-coated vesicle membrane. Its subcellular location is the cell membrane. Functionally, involved in endocytosis. The protein is Adaptin ear-binding coat-associated protein 1 (Necap1) of Rattus norvegicus (Rat).